The following is a 340-amino-acid chain: Entry-fusion complex protein OPG094 (340 aa).

The interval 1-20 (MGGGVSVELPKRDPPPGVPT) is disordered. A lipid anchor (N-myristoyl glycine; by host) is attached at Gly2. The Virion surface segment spans residues 2-319 (GGGVSVELPK…VQHNIKHSFD (318 aa)). Residues 320 to 340 (LKLHLISLLSLLVIWILIVAI) form a helical; Signal-anchor for type II membrane protein membrane-spanning segment.

The protein belongs to the orthopoxvirus OPG086 family. In terms of assembly, interacts with OPG143. Component of the entry fusion complex (EFC) composed of OPG053, OPG076, OPG086, OPG094, OPG095, OPG099, OPG107, OPG143, OPG104, OPG147 and OPG155. Except for OPG095 and OPG053, each of the EFC proteins is required for assembly or stability of the complex. In terms of processing, unglycosylated because produced in viral factories instead of the classic ER -Golgi route.

It localises to the virion membrane. Component of the entry fusion complex (EFC), which consists of 11 proteins. During cell infection, this complex mediates entry of the virion core into the host cytoplasm by a two-step mechanism consisting of lipid mixing of the viral and cellular membranes and subsequent pore formation. The sequence is that of Entry-fusion complex protein OPG094 (OPG094) from Cynomys gunnisoni (Gunnison's prairie dog).